The primary structure comprises 191 residues: Putative NADH dehydrogenase/NAD(P)H nitroreductase (191 aa).

Position 127–132 (127–132 (AAHSLG)) interacts with NAD(+).

It belongs to the nitroreductase family. The cofactor is FMN.

In Methanothermobacter thermautotrophicus (strain ATCC 29096 / DSM 1053 / JCM 10044 / NBRC 100330 / Delta H) (Methanobacterium thermoautotrophicum), this protein is Putative NADH dehydrogenase/NAD(P)H nitroreductase.